Here is a 397-residue protein sequence, read N- to C-terminus: Argininosuccinate synthase (397 aa).

8 to 16 (AYSGGLDTS) contacts ATP. Residues Y86 and S91 each coordinate L-citrulline. G116 contacts ATP. L-aspartate contacts are provided by T118, N122, and D123. An L-citrulline-binding site is contributed by N122. R126, S175, S184, E260, and Y272 together coordinate L-citrulline.

It belongs to the argininosuccinate synthase family. Type 1 subfamily. Homotetramer.

It is found in the cytoplasm. It carries out the reaction L-citrulline + L-aspartate + ATP = 2-(N(omega)-L-arginino)succinate + AMP + diphosphate + H(+). It participates in amino-acid biosynthesis; L-arginine biosynthesis; L-arginine from L-ornithine and carbamoyl phosphate: step 2/3. The sequence is that of Argininosuccinate synthase from Clostridium botulinum (strain Okra / Type B1).